A 284-amino-acid chain; its full sequence is MEMO1 family protein SSO0066 (284 aa).

It belongs to the MEMO1 family.

In Saccharolobus solfataricus (strain ATCC 35092 / DSM 1617 / JCM 11322 / P2) (Sulfolobus solfataricus), this protein is MEMO1 family protein SSO0066.